We begin with the raw amino-acid sequence, 495 residues long: Nuclear receptor subfamily 6 group A member 1 (495 aa).

The segment at 1-34 is disordered; sequence MERDERPPSGGGGGGGSAGFLEPPAALPPPPRNG. Gly residues predominate over residues 9-18; sequence SGGGGGGGSA. Residues 72–147 constitute a DNA-binding region (nuclear receptor); the sequence is QRTCLICGDR…MGMNRKAIRE (76 aa). Residues cysteine 75, cysteine 78, cysteine 92, cysteine 95, cysteine 111, cysteine 117, cysteine 127, and cysteine 130 each contribute to the Zn(2+) site. 2 consecutive NR C4-type zinc fingers follow at residues 75 to 95 and 111 to 135; these read CLICGDRATGLHYGIISCEGC and CSRDKNCVMSRKQRNRCQYCRLLKC. 2 disordered regions span residues 145 to 165 and 177 to 214; these read IREDGMPGGRNKSIGPVQISE and FEEEANHWSNHGDSDHSSPGNRASESNQPSPGSTLSSS. Residues 180-192 are compositionally biased toward basic and acidic residues; that stretch reads EANHWSNHGDSDH. Residues 187–268 are sufficient for interaction with UIMC1; sequence HGDSDHSSPG…RSLDPQSYSL (82 aa). Over residues 202-214 the composition is skewed to low complexity; sequence SNQPSPGSTLSSS. In terms of domain architecture, NR LBD spans 264–495; sequence QSYSLIHQLM…HSCKTSTVKE (232 aa).

Belongs to the nuclear hormone receptor family. NR6 subfamily. As to quaternary structure, homodimer. Interacts with UIMC1. Expressed in the germ cells of both the adult testis and ovary, being most abundant in spermatids.

The protein resides in the nucleus. Its function is as follows. Orphan nuclear receptor that binds to a response element containing the sequence 5'-TCAAGGTCA-3'. Acts as a regulator of embryonic stem cell pluripotency by mediating repression of POU5F1/OCT4: binds to the DR0 element within the POU5F1/OCT4 promoter and inhibits POU5F1/OCT4 expression during embryonic stem cell differentiation. Required to restrict POU5F1/OCT4 expression to the germ cell lineage. Involved in the regulation of gene expression in germ cell development during gametogenesis. The chain is Nuclear receptor subfamily 6 group A member 1 (Nr6a1) from Mus musculus (Mouse).